Consider the following 854-residue polypeptide: Probable inorganic carbon transporter subunit DabA (854 aa).

The Zn(2+) site is built by cysteine 378, aspartate 380, histidine 560, and cysteine 575.

This sequence belongs to the inorganic carbon transporter (TC 9.A.2) DabA family. Forms a complex with DabB. Requires Zn(2+) as cofactor.

It is found in the cell membrane. Its function is as follows. Part of an energy-coupled inorganic carbon pump. The sequence is that of Probable inorganic carbon transporter subunit DabA from Bacillus cereus (strain ATCC 14579 / DSM 31 / CCUG 7414 / JCM 2152 / NBRC 15305 / NCIMB 9373 / NCTC 2599 / NRRL B-3711).